A 342-amino-acid chain; its full sequence is Probable transposase for insertion-like sequence element IS1161 (342 aa).

Residues Ile182–Ala342 form the Integrase catalytic domain.

This sequence belongs to the transposase IS30 family.

Functionally, required for the transposition of the insertion element. The chain is Probable transposase for insertion-like sequence element IS1161 from Streptococcus salivarius.